Reading from the N-terminus, the 305-residue chain is Dihydroorotate dehydrogenase B (NAD(+)), catalytic subunit (305 aa).

FMN-binding positions include serine 21 and 45–46 (KA). Substrate contacts are provided by residues lysine 45 and 69–73 (NAIGL). Positions 99 and 127 each coordinate FMN. Asparagine 127 serves as a coordination point for substrate. Cysteine 130 serves as the catalytic Nucleophile. 2 residues coordinate FMN: lysine 165 and isoleucine 191. A substrate-binding site is contributed by 192–193 (NT). FMN contacts are provided by residues glycine 217, 243–244 (GG), and 265–266 (GT).

Belongs to the dihydroorotate dehydrogenase family. Type 1 subfamily. In terms of assembly, heterotetramer of 2 PyrK and 2 PyrD type B subunits. FMN serves as cofactor.

The protein resides in the cytoplasm. The catalysed reaction is (S)-dihydroorotate + NAD(+) = orotate + NADH + H(+). The protein operates within pyrimidine metabolism; UMP biosynthesis via de novo pathway; orotate from (S)-dihydroorotate (NAD(+) route): step 1/1. In terms of biological role, catalyzes the conversion of dihydroorotate to orotate with NAD(+) as electron acceptor. This is Dihydroorotate dehydrogenase B (NAD(+)), catalytic subunit (pyrD) from Halalkalibacterium halodurans (strain ATCC BAA-125 / DSM 18197 / FERM 7344 / JCM 9153 / C-125) (Bacillus halodurans).